Here is a 779-residue protein sequence, read N- to C-terminus: Chloride channel protein CLC-c (779 aa).

Ser27 is modified (phosphoserine). 12 consecutive transmembrane segments (helical) span residues 92–112 (TFLKWALAFLIGLATGLVGFL), 142–162 (FAFAGCNLILATAAASLCAFI), 190–210 (STLFVKIFGSIFGVAAGFVVG), 215–235 (MVHTGACIANLLGQGGSKKYR), 257–277 (GAAAGVAAAFRAPVGGVLFAL), 287–307 (ALLWRTFFTTAVVAVVLRSLI), 341–361 (LAIVFLGVIGGVLGSLYNYLV), 380–400 (IMLVMAVSILSSCCAFGLPWL), 466–486 (LAIFFVAVYCLGIITYGIAIP), 488–508 (GLFIPVILAGASYGRLVGRLL), 520–540 (SLLGAASFLGGTMRMTVSLCV), and 541–561 (ILLELTNNLLMLPLVMLVLLI). The 59-residue stretch at 601-659 (DVVSGALISFSRVEKVGVIWQALKMTRHNGFPVIDEPPFTEASELCGIALRSHLLVLLQ) folds into the CBS 1 domain. Ser672 carries the phosphoserine modification. Residues 713-777 (ITNTSPYTVL…VLGLYPHIDP (65 aa)) enclose the CBS 2 domain. The helical transmembrane segment at 741-761 (HLCVVPKTPGRPPIVGILTRH) threads the bilayer.

It belongs to the chloride channel (TC 2.A.49) family. As to quaternary structure, homodimer. Interacts with PP2A5. As to expression, broadly expressed in the plant.

It is found in the membrane. In terms of biological role, voltage-gated chloride channel. In Arabidopsis thaliana (Mouse-ear cress), this protein is Chloride channel protein CLC-c (CLC-C).